We begin with the raw amino-acid sequence, 159 residues long: Globin CTT-W (159 aa).

A signal peptide spans 1–16 (MKFLVILTLCIAGAIA). Residues 17-159 (HCDKAPFIKA…HHAIVYSILE (143 aa)) form the Globin domain. Positions 73 and 108 each coordinate heme b.

This sequence belongs to the globin family.

In Chironomus thummi thummi (Midge), this protein is Globin CTT-W (CTT-W).